The chain runs to 274 residues: GCN5-related N-acetyltransferase 7, chloroplastic (274 aa).

The transit peptide at 1-65 directs the protein to the chloroplast; it reads MAFLCSSLPS…STFVISESVS (65 aa). In terms of domain architecture, N-acetyltransferase spans 75 to 267; that stretch reads LRVRTFNELN…QRLLLWLALP (193 aa). Residues 189-191, 197-202, 228-230, and Tyr235 contribute to the acetyl-CoA site; these read VCV, RNGVGY, and NEA. Catalysis depends on Tyr235, which acts as the Proton donor.

The protein belongs to the acetyltransferase family. GNAT subfamily. Oligomer. In terms of processing, autoacetylated. Expressed in green tissues.

It is found in the plastid. It localises to the chloroplast. The catalysed reaction is an N-terminal L-alpha-aminoacyl-[protein] + acetyl-CoA = N-terminal N(alpha)-acetyl-L-alpha-aminoacyl-[protein] + CoA + H(+). It catalyses the reaction L-lysyl-[protein] + acetyl-CoA = N(6)-acetyl-L-lysyl-[protein] + CoA + H(+). It carries out the reaction N-terminal L-alanyl-[protein] + acetyl-CoA = N-terminal N(alpha)-acetyl-L-alanyl-[protein] + CoA + H(+). The enzyme catalyses N-terminal L-seryl-[protein] + acetyl-CoA = N-terminal N(alpha)-acetyl-L-seryl-[protein] + CoA + H(+). The catalysed reaction is N-terminal L-threonyl-[protein] + acetyl-CoA = N-terminal N(alpha)-acetyl-L-threonyl-[protein] + CoA + H(+). It catalyses the reaction N-terminal L-methionyl-[protein] + acetyl-CoA = N-terminal N(alpha)-acetyl-L-methionyl-[protein] + CoA + H(+). It carries out the reaction N-terminal L-prolyl-[protein] + acetyl-CoA = N-terminal N(alpha)-acetyl-L-prolyl-[protein] + CoA + H(+). The enzyme catalyses N-terminal L-valyl-[protein] + acetyl-CoA = N-terminal N(alpha)-acetyl-L-valyl-[protein] + CoA + H(+). Functionally, protein acetyltransferase with dual specificity triggering both N-alpha-acetylation (NTA), with a large spectrum of modified N-termini, including methionine, alanine, serine, threonine and to a lower extent valine and proline as substrates, and epsilon-lysine acetylation (KA). This Arabidopsis thaliana (Mouse-ear cress) protein is GCN5-related N-acetyltransferase 7, chloroplastic.